A 488-amino-acid chain; its full sequence is Catalase (488 aa).

The interval methionine 1–alanine 24 is disordered. Residues leucine 7–threonine 23 are compositionally biased toward polar residues. Active-site residues include histidine 55 and asparagine 128. Position 338 (tyrosine 338) interacts with heme.

The protein belongs to the catalase family. Heme is required as a cofactor.

Its subcellular location is the cytoplasm. It carries out the reaction 2 H2O2 = O2 + 2 H2O. Its function is as follows. Decomposes hydrogen peroxide into water and oxygen; serves to protect cells from the toxic effects of hydrogen peroxide. In Listeria innocua serovar 6a (strain ATCC BAA-680 / CLIP 11262), this protein is Catalase (kat).